The primary structure comprises 308 residues: Glutathione synthetase (308 aa).

The 185-residue stretch at 120–304 folds into the ATP-grasp domain; sequence KLGALRFNNL…LADQVIARLL (185 aa). 146–202 contributes to the ATP binding site; that stretch reads AREQEEVVLKPLGGRAGQGLVRVAGAAPGLEALLELVTDQEQLPVMVQRFLPAVIEG. Residues Glu275 and Asn277 each coordinate Mg(2+).

Belongs to the prokaryotic GSH synthase family. The cofactor is Mg(2+). It depends on Mn(2+) as a cofactor.

The enzyme catalyses gamma-L-glutamyl-L-cysteine + glycine + ATP = glutathione + ADP + phosphate + H(+). It functions in the pathway sulfur metabolism; glutathione biosynthesis; glutathione from L-cysteine and L-glutamate: step 2/2. This is Glutathione synthetase from Prochlorococcus marinus (strain MIT 9313).